Here is a 237-residue protein sequence, read N- to C-terminus: 1-(5-phosphoribosyl)-5-[(5-phosphoribosylamino)methylideneamino] imidazole-4-carboxamide isomerase (237 aa).

D8 serves as the catalytic Proton acceptor. D129 acts as the Proton donor in catalysis.

Belongs to the HisA/HisF family.

It localises to the cytoplasm. It carries out the reaction 1-(5-phospho-beta-D-ribosyl)-5-[(5-phospho-beta-D-ribosylamino)methylideneamino]imidazole-4-carboxamide = 5-[(5-phospho-1-deoxy-D-ribulos-1-ylimino)methylamino]-1-(5-phospho-beta-D-ribosyl)imidazole-4-carboxamide. Its pathway is amino-acid biosynthesis; L-histidine biosynthesis; L-histidine from 5-phospho-alpha-D-ribose 1-diphosphate: step 4/9. This Dehalococcoides mccartyi (strain ATCC BAA-2266 / KCTC 15142 / 195) (Dehalococcoides ethenogenes (strain 195)) protein is 1-(5-phosphoribosyl)-5-[(5-phosphoribosylamino)methylideneamino] imidazole-4-carboxamide isomerase.